Consider the following 292-residue polypeptide: Ribosomal protein L11 methyltransferase (292 aa).

4 residues coordinate S-adenosyl-L-methionine: threonine 144, glycine 165, aspartate 187, and asparagine 229.

This sequence belongs to the methyltransferase superfamily. PrmA family.

It is found in the cytoplasm. It catalyses the reaction L-lysyl-[protein] + 3 S-adenosyl-L-methionine = N(6),N(6),N(6)-trimethyl-L-lysyl-[protein] + 3 S-adenosyl-L-homocysteine + 3 H(+). In terms of biological role, methylates ribosomal protein L11. The sequence is that of Ribosomal protein L11 methyltransferase from Pseudomonas putida (strain ATCC 47054 / DSM 6125 / CFBP 8728 / NCIMB 11950 / KT2440).